The following is a 649-amino-acid chain: Echinoderm microtubule-associated protein-like 2 (649 aa).

The tandem atypical propeller in EMLs stretch occupies residues 10-649 (KEVIFSMEEG…DTSVLQWRVA (640 aa)). 12 WD repeats span residues 56–93 (KLDW…LYSV), 97–144 (RQRH…VWDS), 151–192 (HVLG…VWDW), 195–234 (ESKV…FWSL), 241–280 (KRQG…VWGK), 285–323 (ITQE…LWGS), 369–406 (FSLL…LWSS), 410–447 (QPVW…LLDT), 452–489 (LVAI…VYTV), 495–535 (KVSR…YWDP), 564–602 (FGIW…LFSY), and 609–648 (ALSH…QWRV). Residues 65-106 (GRDCRANLYLLPTGEVVYFVASVAVLYSVEEQRQRHYLGHND) adopt a coiled-coil conformation.

Belongs to the WD repeat EMAP family. In terms of assembly, interacts with GRID2 and may also interact with GRID1. Interacts with EML3. Binds unpolymerized tubulins via its WD repeat region.

The protein resides in the cytoplasm. It is found in the cytoskeleton. Its subcellular location is the spindle. Tubulin binding protein that inhibits microtubule nucleation and growth, resulting in shorter microtubules. This chain is Echinoderm microtubule-associated protein-like 2 (Eml2), found in Mus musculus (Mouse).